The sequence spans 610 residues: Dopamine beta-hydroxylase (610 aa).

Residues 1 to 9 are Cytoplasmic-facing; sequence MKVPSPSVR. A helical; Signal-anchor for type II membrane protein membrane pass occupies residues 10 to 30; it reads EAASMYGTAVAIFLVILVAAL. Over 31 to 610 the chain is Intragranular; that stretch reads QGSEPPESPF…TVVDIGGGKG (580 aa). In terms of domain architecture, DOMON spans 50–166; sequence GTLELSWNVS…GTVHLVYGIL (117 aa). N-linked (GlcNAc...) asparagine glycans are attached at residues Asn57, Asn177, and Asn194. 6 disulfide bridges follow: Cys147-Cys589, Cys225-Cys276, Cys262-Cys288, Cys383-Cys496, Cys387-Cys558, and Cys459-Cys481. The active site involves Tyr223. Cu(2+) is bound by residues His255 and His256. The Cu(2+) site is built by His326, His405, His407, and Met480. His405 is an active-site residue. The tract at residues 586–610 is disordered; sequence TPRCPASRGRSPAGPTVVDIGGGKG.

It belongs to the copper type II ascorbate-dependent monooxygenase family. As to quaternary structure, homotetramer; composed of two disulfide-linked dimers. Cu(2+) serves as cofactor. Proteolytic cleavage after the membrane-anchor leads to the release of the soluble form. Post-translationally, N-glycosylated. In terms of tissue distribution, detected in adrenal medulla chromaffin cells.

The protein resides in the cytoplasmic vesicle. Its subcellular location is the secretory vesicle lumen. It localises to the secretory vesicle. It is found in the chromaffin granule lumen. The protein localises to the secreted. The protein resides in the secretory vesicle membrane. Its subcellular location is the chromaffin granule membrane. The enzyme catalyses dopamine + 2 L-ascorbate + O2 = (R)-noradrenaline + 2 monodehydro-L-ascorbate radical + H2O. It participates in catecholamine biosynthesis; (R)-noradrenaline biosynthesis; (R)-noradrenaline from dopamine: step 1/1. Catalyzes the hydroxylation of dopamine to noradrenaline (also known as norepinephrine), and is thus vital for regulation of these neurotransmitters. This chain is Dopamine beta-hydroxylase (DBH), found in Equus caballus (Horse).